The chain runs to 31 residues: Cytochrome b6-f complex subunit 6 (31 aa).

A helical transmembrane segment spans residues 3–23 (TITSYFGFLLAVLTITSGLFI).

Belongs to the PetL family. The 4 large subunits of the cytochrome b6-f complex are cytochrome b6, subunit IV (17 kDa polypeptide, PetD), cytochrome f and the Rieske protein, while the 4 small subunits are PetG, PetL, PetM and PetN. The complex functions as a dimer.

The protein resides in the plastid. The protein localises to the chloroplast thylakoid membrane. In terms of biological role, component of the cytochrome b6-f complex, which mediates electron transfer between photosystem II (PSII) and photosystem I (PSI), cyclic electron flow around PSI, and state transitions. PetL is important for photoautotrophic growth as well as for electron transfer efficiency and stability of the cytochrome b6-f complex. The polypeptide is Cytochrome b6-f complex subunit 6 (Lotus japonicus (Lotus corniculatus var. japonicus)).